Consider the following 218-residue polypeptide: Octanoyltransferase (218 aa).

The 176-residue stretch at 31 to 206 (REAADEVWLV…QLVKHLDYAE (176 aa)) folds into the BPL/LPL catalytic domain. Residues 70–77 (RGGQVTYH), 137–139 (SLG), and 150–152 (GLA) each bind substrate. Residue Cys-168 is the Acyl-thioester intermediate of the active site.

Belongs to the LipB family.

It is found in the cytoplasm. It carries out the reaction octanoyl-[ACP] + L-lysyl-[protein] = N(6)-octanoyl-L-lysyl-[protein] + holo-[ACP] + H(+). Its pathway is protein modification; protein lipoylation via endogenous pathway; protein N(6)-(lipoyl)lysine from octanoyl-[acyl-carrier-protein]: step 1/2. Catalyzes the transfer of endogenously produced octanoic acid from octanoyl-acyl-carrier-protein onto the lipoyl domains of lipoate-dependent enzymes. Lipoyl-ACP can also act as a substrate although octanoyl-ACP is likely to be the physiological substrate. In Pseudomonas syringae pv. syringae (strain B728a), this protein is Octanoyltransferase.